The following is a 298-amino-acid chain: Glutamyl-Q tRNA(Asp) synthetase (298 aa).

Residues 9 to 13 (RFAPS) and Glu-45 contribute to the L-glutamate site. The short motif at 12–22 (PSPSGELHFGS) is the 'HIGH' region element. Residues Cys-101, Cys-103, Tyr-115, and Cys-119 each contribute to the Zn(2+) site. The L-glutamate site is built by Tyr-172 and Arg-190. A 'KMSKS' region motif is present at residues 228-232 (KLSKQ). Lys-231 contributes to the ATP binding site.

Belongs to the class-I aminoacyl-tRNA synthetase family. GluQ subfamily. Zn(2+) is required as a cofactor.

Functionally, catalyzes the tRNA-independent activation of glutamate in presence of ATP and the subsequent transfer of glutamate onto a tRNA(Asp). Glutamate is transferred on the 2-amino-5-(4,5-dihydroxy-2-cyclopenten-1-yl) moiety of the queuosine in the wobble position of the QUC anticodon. The protein is Glutamyl-Q tRNA(Asp) synthetase of Cronobacter sakazakii (strain ATCC BAA-894) (Enterobacter sakazakii).